A 314-amino-acid chain; its full sequence is Regulator of microtubule dynamics protein 1 (314 aa).

Lys-165 is subject to N6-succinyllysine. 2 TPR repeats span residues Ala-168 to Asp-204 and Pro-222 to Phe-258.

It belongs to the RMDN family. In terms of assembly, interacts with microtubules.

It is found in the cytoplasm. The protein localises to the cytoskeleton. Its subcellular location is the spindle. It localises to the spindle pole. This chain is Regulator of microtubule dynamics protein 1 (RMDN1), found in Pongo abelii (Sumatran orangutan).